The chain runs to 282 residues: Bifunctional protein FolD (282 aa).

NADP(+) contacts are provided by residues 164–166 and S189; that span reads GRS.

The protein belongs to the tetrahydrofolate dehydrogenase/cyclohydrolase family. As to quaternary structure, homodimer.

It carries out the reaction (6R)-5,10-methylene-5,6,7,8-tetrahydrofolate + NADP(+) = (6R)-5,10-methenyltetrahydrofolate + NADPH. It catalyses the reaction (6R)-5,10-methenyltetrahydrofolate + H2O = (6R)-10-formyltetrahydrofolate + H(+). Its pathway is one-carbon metabolism; tetrahydrofolate interconversion. Catalyzes the oxidation of 5,10-methylenetetrahydrofolate to 5,10-methenyltetrahydrofolate and then the hydrolysis of 5,10-methenyltetrahydrofolate to 10-formyltetrahydrofolate. This is Bifunctional protein FolD from Lactobacillus helveticus (strain DPC 4571).